A 477-amino-acid chain; its full sequence is Argininosuccinate lyase (477 aa).

The protein belongs to the lyase 1 family. Argininosuccinate lyase subfamily.

The protein localises to the cytoplasm. The catalysed reaction is 2-(N(omega)-L-arginino)succinate = fumarate + L-arginine. It functions in the pathway amino-acid biosynthesis; L-arginine biosynthesis; L-arginine from L-ornithine and carbamoyl phosphate: step 3/3. The polypeptide is Argininosuccinate lyase (Corynebacterium diphtheriae (strain ATCC 700971 / NCTC 13129 / Biotype gravis)).